We begin with the raw amino-acid sequence, 254 residues long: Phosphoribosylaminoimidazole-succinocarboxamide synthase (254 aa).

It belongs to the SAICAR synthetase family.

The enzyme catalyses 5-amino-1-(5-phospho-D-ribosyl)imidazole-4-carboxylate + L-aspartate + ATP = (2S)-2-[5-amino-1-(5-phospho-beta-D-ribosyl)imidazole-4-carboxamido]succinate + ADP + phosphate + 2 H(+). The protein operates within purine metabolism; IMP biosynthesis via de novo pathway; 5-amino-1-(5-phospho-D-ribosyl)imidazole-4-carboxamide from 5-amino-1-(5-phospho-D-ribosyl)imidazole-4-carboxylate: step 1/2. This is Phosphoribosylaminoimidazole-succinocarboxamide synthase from Bartonella henselae (strain ATCC 49882 / DSM 28221 / CCUG 30454 / Houston 1) (Rochalimaea henselae).